Reading from the N-terminus, the 364-residue chain is Tripartite motif-containing protein 54 (364 aa).

The RING-type zinc-finger motif lies at 26 to 82 (CPICLEMFSKPVVILPCQHNLCRKCANDVFQASNPLWQSRGSTTVSSGGRFRCPSCR). A B box-type zinc finger spans residues 121-163 (EQHLMCEEHEDEKINIYCLSCEVPTCSLCKVFGAHKDCEVAPL). Zn(2+)-binding residues include Cys-126, His-129, Cys-149, and His-155. Positions 168 to 211 (KRQKSELSDGIAMLVAGNDRVQAVITQMEEVCQTIEDNSRRQKQ) are mediates microtubule-binding and homooligomerization. Residues 194 to 252 (QMEEVCQTIEDNSRRQKQLLNQKFETLCAVLEERKGELLQALARVQEEKLQRVRSLIRQ) adopt a coiled-coil conformation. Residues 271–329 (MEEPQMALYLQQAKELINKVGAMSKVELAGRPEPGYESMEQFSVIVEHVAEMLRTIDFQ) form the COS domain. Positions 328-364 (FQPGASGDEEDDEVTLDGEEGNTGLEEERLDGPEGLH) are disordered. Over residues 334–347 (GDEEDDEVTLDGEE) the composition is skewed to acidic residues. Basic and acidic residues predominate over residues 353-364 (EEERLDGPEGLH).

In terms of assembly, homooligomer and heterooligomer. Interacts with TRIM63 and probably with TRIM55. Interacts with tubulin.

The protein resides in the cytoplasm. Its subcellular location is the cytoskeleton. The protein localises to the myofibril. It is found in the sarcomere. It localises to the z line. In terms of biological role, may bind and stabilize microtubules during myotubes formation. In Rattus norvegicus (Rat), this protein is Tripartite motif-containing protein 54 (Trim54).